The primary structure comprises 218 residues: MSIGILGKKLGMSQFFDEQGRAVPVTLIEAGPCRITQLKNDDTDGYSAVQIGFGETREKLINKPAQGHLNKSGEGLLRHLREYRVDSVEGLELGGAITVGDFEAGQKVDVSGDTVGRGFAGYQKRHGFSRGPMTHGSKNHREPGSTGAGTTPGRIYPGKRMAGRYGGKKITTRGLTILKVDSEHNLLVVKGSVPGKPGALLNIRPALRVGAKPANGGK.

Residues 124-162 (KRHGFSRGPMTHGSKNHREPGSTGAGTTPGRIYPGKRMA) form a disordered region.

It belongs to the universal ribosomal protein uL3 family. In terms of assembly, part of the 50S ribosomal subunit. Forms a cluster with proteins L14 and L19.

In terms of biological role, one of the primary rRNA binding proteins, it binds directly near the 3'-end of the 23S rRNA, where it nucleates assembly of the 50S subunit. The protein is Large ribosomal subunit protein uL3 of Synechococcus sp. (strain CC9605).